Consider the following 745-residue polypeptide: Polyribonucleotide nucleotidyltransferase (745 aa).

Mg(2+) contacts are provided by Asp487 and Asp493. The KH domain maps to 554–613 (PSTTTIKIDKDKIRDIIGPGGKVIKEICEISGAKIDISDDGTVSIYASDRDKLKVALDKI). The 69-residue stretch at 623 to 691 (GEIFNGTVMK…NKGKAKLTIK (69 aa)) folds into the S1 motif domain. The segment at 691–745 (KNADKDKSSNNTKPKTNAKDNSEPEQRRDSSKKRAWNEDNNAETAEVITERKYFN) is disordered. Basic and acidic residues predominate over residues 707 to 719 (NAKDNSEPEQRRD).

Belongs to the polyribonucleotide nucleotidyltransferase family. Mg(2+) serves as cofactor.

It is found in the cytoplasm. It catalyses the reaction RNA(n+1) + phosphate = RNA(n) + a ribonucleoside 5'-diphosphate. Involved in mRNA degradation. Catalyzes the phosphorolysis of single-stranded polyribonucleotides processively in the 3'- to 5'-direction. This chain is Polyribonucleotide nucleotidyltransferase, found in Rickettsia massiliae (strain Mtu5).